The chain runs to 86 residues: Cytochrome c oxidase subunit 6B1 (86 aa).

Position 2 is an N-acetylalanine (alanine 2). Residues 27–73 enclose the CHCH domain; that stretch reads TRNCWQNYLDFHRCQKAMTAKGGDISVCEWYQRVYQSLCPTSWVTDW. The Cx9C motif motif lies at 30 to 40; the sequence is CWQNYLDFHRC. 2 cysteine pairs are disulfide-bonded: cysteine 30/cysteine 65 and cysteine 40/cysteine 54. Positions 54-65 match the Cx10C motif motif; the sequence is CEWYQRVYQSLC.

The protein belongs to the cytochrome c oxidase subunit 6B family. Component of the cytochrome c oxidase (complex IV, CIV), a multisubunit enzyme composed of 14 subunits. The complex is composed of a catalytic core of 3 subunits MT-CO1, MT-CO2 and MT-CO3, encoded in the mitochondrial DNA, and 11 supernumerary subunits COX4I1 (or COX4I2), COX5A, COX5B, COX6A1 (or COX6A2), COX6B1 (or COX6B2), COX6C, COX7A2 (or COX7A1), COX7B, COX7C, COX8A and NDUFA4, which are encoded in the nuclear genome. The complex exists as a monomer or a dimer and forms supercomplexes (SCs) in the inner mitochondrial membrane with NADH-ubiquinone oxidoreductase (complex I, CI) and ubiquinol-cytochrome c oxidoreductase (cytochrome b-c1 complex, complex III, CIII), resulting in different assemblies (supercomplex SCI(1)III(2)IV(1) and megacomplex MCI(2)III(2)IV(2)).

The protein resides in the mitochondrion inner membrane. It functions in the pathway energy metabolism; oxidative phosphorylation. Its function is as follows. Component of the cytochrome c oxidase, the last enzyme in the mitochondrial electron transport chain which drives oxidative phosphorylation. The respiratory chain contains 3 multisubunit complexes succinate dehydrogenase (complex II, CII), ubiquinol-cytochrome c oxidoreductase (cytochrome b-c1 complex, complex III, CIII) and cytochrome c oxidase (complex IV, CIV), that cooperate to transfer electrons derived from NADH and succinate to molecular oxygen, creating an electrochemical gradient over the inner membrane that drives transmembrane transport and the ATP synthase. Cytochrome c oxidase is the component of the respiratory chain that catalyzes the reduction of oxygen to water. Electrons originating from reduced cytochrome c in the intermembrane space (IMS) are transferred via the dinuclear copper A center (CU(A)) of subunit 2 and heme A of subunit 1 to the active site in subunit 1, a binuclear center (BNC) formed by heme A3 and copper B (CU(B)). The BNC reduces molecular oxygen to 2 water molecules using 4 electrons from cytochrome c in the IMS and 4 protons from the mitochondrial matrix. This is Cytochrome c oxidase subunit 6B1 (COX6B1) from Homo sapiens (Human).